The following is a 327-amino-acid chain: Lipoyl synthase (327 aa).

Residues cysteine 74, cysteine 79, cysteine 85, cysteine 100, cysteine 104, cysteine 107, and serine 314 each contribute to the [4Fe-4S] cluster site. The 218-residue stretch at 86–303 (FSGGTATFMI…AEEGEKMGFK (218 aa)) folds into the Radical SAM core domain.

This sequence belongs to the radical SAM superfamily. Lipoyl synthase family. [4Fe-4S] cluster serves as cofactor.

It localises to the cytoplasm. It catalyses the reaction [[Fe-S] cluster scaffold protein carrying a second [4Fe-4S](2+) cluster] + N(6)-octanoyl-L-lysyl-[protein] + 2 oxidized [2Fe-2S]-[ferredoxin] + 2 S-adenosyl-L-methionine + 4 H(+) = [[Fe-S] cluster scaffold protein] + N(6)-[(R)-dihydrolipoyl]-L-lysyl-[protein] + 4 Fe(3+) + 2 hydrogen sulfide + 2 5'-deoxyadenosine + 2 L-methionine + 2 reduced [2Fe-2S]-[ferredoxin]. Its pathway is protein modification; protein lipoylation via endogenous pathway; protein N(6)-(lipoyl)lysine from octanoyl-[acyl-carrier-protein]: step 2/2. Its function is as follows. Catalyzes the radical-mediated insertion of two sulfur atoms into the C-6 and C-8 positions of the octanoyl moiety bound to the lipoyl domains of lipoate-dependent enzymes, thereby converting the octanoylated domains into lipoylated derivatives. In Pseudomonas aeruginosa (strain LESB58), this protein is Lipoyl synthase.